Reading from the N-terminus, the 709-residue chain is Protein SOSEKI 3 (709 aa).

A DIX-like oligomerization domain region spans residues 8–101 (SSVQVLYQLS…YVLRASELFD (94 aa)). 5 disordered regions span residues 242-266 (LHTP…AKRM), 315-344 (RDGR…AEQS), 358-393 (GGSS…KTPC), 411-439 (PSPA…NRPS), and 506-560 (DSPT…DTKP). Basic and acidic residues predominate over residues 329-342 (ELREVQNEKEKEAE). The span at 417-436 (NKAHSSLDRQEIPPQEECKN) shows a compositional bias: basic and acidic residues. Positions 529–544 (VKTSNSLPRVKTTTSP) are enriched in polar residues. A C2HC/C3H-type zinc finger spans residues 663–692 (ILQECSTCGRTFKPDSLQVHMRGCHPPQYA). Zn(2+) is bound by residues Cys667, Cys670, His682, and Cys686.

Belongs to the SOSEKI family. Homodimer. Forms long polymer filaments with other SOKs proteins polymers crucial for polar localization and biological activity. It depends on Zn(2+) as a cofactor.

The protein resides in the cell membrane. SOSEKI proteins locally interpret global polarity cues and can influence cell division orientation to coordinate cell polarization relative to body axes. The sequence is that of Protein SOSEKI 3 from Physcomitrium patens (Spreading-leaved earth moss).